The following is a 504-amino-acid chain: Lysine--tRNA ligase (504 aa).

Mg(2+) contacts are provided by Glu-411 and Glu-418.

Belongs to the class-II aminoacyl-tRNA synthetase family. Homodimer. The cofactor is Mg(2+).

It localises to the cytoplasm. It carries out the reaction tRNA(Lys) + L-lysine + ATP = L-lysyl-tRNA(Lys) + AMP + diphosphate. In Clostridium botulinum (strain Loch Maree / Type A3), this protein is Lysine--tRNA ligase.